Here is a 443-residue protein sequence, read N- to C-terminus: 23S rRNA (uracil(1939)-C(5))-methyltransferase RlmD (443 aa).

A TRAM domain is found at 10–68 (RVTTKQTLTVTVNSLDPFGQGVAHHQGKAIFIPGALPGEQAEIELTEQKRQYSRGKLKR). Residues Cys-81, Cys-87, Cys-90, and Cys-168 each contribute to the [4Fe-4S] cluster site. Gln-271, Phe-300, Asn-305, Glu-321, Asn-348, and Asp-369 together coordinate S-adenosyl-L-methionine. The Nucleophile role is filled by Cys-395.

This sequence belongs to the class I-like SAM-binding methyltransferase superfamily. RNA M5U methyltransferase family. RlmD subfamily.

The enzyme catalyses uridine(1939) in 23S rRNA + S-adenosyl-L-methionine = 5-methyluridine(1939) in 23S rRNA + S-adenosyl-L-homocysteine + H(+). In terms of biological role, catalyzes the formation of 5-methyl-uridine at position 1939 (m5U1939) in 23S rRNA. The protein is 23S rRNA (uracil(1939)-C(5))-methyltransferase RlmD of Yersinia enterocolitica serotype O:8 / biotype 1B (strain NCTC 13174 / 8081).